Reading from the N-terminus, the 66-residue chain is Large ribosomal subunit protein bL31 (66 aa).

Positions 16, 18, 36, and 39 each coordinate Zn(2+).

This sequence belongs to the bacterial ribosomal protein bL31 family. Type A subfamily. As to quaternary structure, part of the 50S ribosomal subunit. Zn(2+) is required as a cofactor.

In terms of biological role, binds the 23S rRNA. The protein is Large ribosomal subunit protein bL31 of Pelobacter propionicus (strain DSM 2379 / NBRC 103807 / OttBd1).